The following is an 844-amino-acid chain: Neuronal PAS domain-containing protein 4B (844 aa).

Residues 61-74 are basic motif; degenerate; the sequence is KMYRSTKGASKARR. Positions 61-114 constitute a bHLH domain; that stretch reads KMYRSTKGASKARRDQINAEIRSLKELLPISDADKARLSYLHIMSLACIYTRKS. A helix-loop-helix motif region spans residues 75 to 114; it reads DQINAEIRSLKELLPISDADKARLSYLHIMSLACIYTRKS. PAS domains follow at residues 132–190 and 294–343; these read SLPE…PVDH and DMRI…LHNG. Positions 410 to 422 are enriched in polar residues; it reads SRQSSDPLSSPDQ. 4 disordered regions span residues 410 to 432, 444 to 479, 702 to 725, and 757 to 784; these read SRQS…SGLS, GRSS…GGGH, PLPN…SYSQ, and TEGG…EAPA. Pro residues predominate over residues 704 to 716; sequence PNLPSPSPVPPSP.

Efficient DNA binding requires dimerization with another bHLH protein.

The protein localises to the nucleus. In terms of biological role, transcription factor expressed in neurons of the brain that regulates the excitatory-inhibitory balance within neural circuits and is required for contextual memory in the hippocampus. Plays a key role in the structural and functional plasticity of neurons. Acts as an early-response transcription factor in both excitatory and inhibitory neurons, where it induces distinct but overlapping sets of late-response genes in these two types of neurons, allowing the synapses that form on inhibitory and excitatory neurons to be modified by neuronal activity in a manner specific to their function within a circuit, thereby facilitating appropriate circuit responses to sensory experience. The polypeptide is Neuronal PAS domain-containing protein 4B (npas4b) (Danio rerio (Zebrafish)).